Consider the following 198-residue polypeptide: Probable GTP-binding protein EngB (198 aa).

Residues 22 to 195 (DLPEIALAGR…WKAIHKFTKT (174 aa)) form the EngB-type G domain. Residues 30–37 (GRSNVGKS), 57–61 (GKTQT), 75–78 (DVPG), 142–145 (TKAD), and 174–176 (FSS) each bind GTP. Residues serine 37 and threonine 59 each coordinate Mg(2+).

It belongs to the TRAFAC class TrmE-Era-EngA-EngB-Septin-like GTPase superfamily. EngB GTPase family. The cofactor is Mg(2+).

Its function is as follows. Necessary for normal cell division and for the maintenance of normal septation. The chain is Probable GTP-binding protein EngB from Bacillus anthracis (strain A0248).